A 461-amino-acid chain; its full sequence is Argininosuccinate lyase (461 aa).

The protein belongs to the lyase 1 family. Argininosuccinate lyase subfamily.

Its subcellular location is the cytoplasm. It carries out the reaction 2-(N(omega)-L-arginino)succinate = fumarate + L-arginine. It participates in amino-acid biosynthesis; L-arginine biosynthesis; L-arginine from L-ornithine and carbamoyl phosphate: step 3/3. The sequence is that of Argininosuccinate lyase from Limosilactobacillus reuteri subsp. reuteri (strain JCM 1112) (Lactobacillus reuteri).